The sequence spans 432 residues: Adenylosuccinate synthetase (432 aa).

GTP-binding positions include 16–22 and 44–46; these read GDEGKGK and GHM. Aspartate 17 acts as the Proton acceptor in catalysis. Aspartate 17 and glycine 44 together coordinate Mg(2+). IMP-binding positions include 17–20, 42–45, threonine 132, arginine 146, glutamine 226, threonine 241, and arginine 305; these read DEGK and NAGH. The active-site Proton donor is histidine 45. 301–307 serves as a coordination point for substrate; the sequence is LNTGRPR. GTP-binding positions include arginine 307, 333–335, and 415–417; these read LFD and SVG.

It belongs to the adenylosuccinate synthetase family. As to quaternary structure, homodimer. The cofactor is Mg(2+).

The protein resides in the cytoplasm. It carries out the reaction IMP + L-aspartate + GTP = N(6)-(1,2-dicarboxyethyl)-AMP + GDP + phosphate + 2 H(+). It participates in purine metabolism; AMP biosynthesis via de novo pathway; AMP from IMP: step 1/2. Plays an important role in the de novo pathway of purine nucleotide biosynthesis. Catalyzes the first committed step in the biosynthesis of AMP from IMP. The chain is Adenylosuccinate synthetase from Mycoplasma mycoides subsp. mycoides SC (strain CCUG 32753 / NCTC 10114 / PG1).